The following is a 414-amino-acid chain: Serine hydroxymethyltransferase (414 aa).

(6S)-5,6,7,8-tetrahydrofolate is bound by residues Leu118 and 122–124 (GHL). Lys227 is subject to N6-(pyridoxal phosphate)lysine. (6S)-5,6,7,8-tetrahydrofolate is bound by residues Glu240 and 350 to 352 (SPF).

Belongs to the SHMT family. Homodimer. The cofactor is pyridoxal 5'-phosphate.

The protein resides in the cytoplasm. It catalyses the reaction (6R)-5,10-methylene-5,6,7,8-tetrahydrofolate + glycine + H2O = (6S)-5,6,7,8-tetrahydrofolate + L-serine. It functions in the pathway one-carbon metabolism; tetrahydrofolate interconversion. It participates in amino-acid biosynthesis; glycine biosynthesis; glycine from L-serine: step 1/1. In terms of biological role, catalyzes the reversible interconversion of serine and glycine with tetrahydrofolate (THF) serving as the one-carbon carrier. This reaction serves as the major source of one-carbon groups required for the biosynthesis of purines, thymidylate, methionine, and other important biomolecules. Also exhibits THF-independent aldolase activity toward beta-hydroxyamino acids, producing glycine and aldehydes, via a retro-aldol mechanism. The sequence is that of Serine hydroxymethyltransferase from Bacillus thuringiensis (strain Al Hakam).